Reading from the N-terminus, the 184-residue chain is MTLRKILALTCLLLPMMASAHQFETGQRVPPIGITDRGELVLDKDQFSYKTWNSAQLVGKVRVLQHIAGRTSAKEKNATLIEAIKSAKLPHDRYQTTTIVNTDDAIPGSGMFVRSSLESNKKLYPWSQFIVDSNGVALGAWQLDEESSAVVVLDKDGRVQWAKDGALTPEEVQQVMDLLQKLLK.

The first 20 residues, Met-1–Ala-20, serve as a signal peptide directing secretion.

To H.influenzae HI_0045.

The protein resides in the periplasm. This is an uncharacterized protein from Escherichia coli (strain K12).